The sequence spans 81 residues: uncharacterized protein (81 aa).

In terms of domain architecture, SpoVT-AbrB spans Met-1 to Thr-45.

To B.subtilis SpoVT.

This is an uncharacterized protein from Mycobacterium bovis (strain ATCC BAA-935 / AF2122/97).